A 597-amino-acid polypeptide reads, in one-letter code: MQHDRPGSRPEEGGEQQIGGDAELNSQIRLLEDEVALLRRKLNESPQQVRLLEKRLAEASERVSQLTERNAKLTETLKEARSQLMALREEVDRLAQPPSGYGVFLHAYEDSTVDVFTSGRKMRVSVSPNVATEDLRLGQSVRLNEALTVVEAGAFEQTGEVCTFRELLPVDAVTRSPRALVLGHTDEERVVWVTEPLAESGLKAGDSVLVDSKAGYAYDLVPKAEVEDLVLEEVPDVGYNDIGGLGNQIEQIRDAVELPFLHSDLYVEYQLRPPKGVLLYGPPGCGKTLIAKAVANSLAKKVAASRGDDDGQAKSYFLNIKGPELLNKFVGETERHIRLIFQRAREKASEGTPVIVFFDEMDSIFRTRGSGVSSDVETTIVPQLLSEIDGVEGLENVIVIGASNREDMIDPAILRPGRLDVKIKIERPDAESAKDIFSKYLTRQLPIHEEDLKEFGGDQASCVEAMIQTTVERMYAETDENRFLEVTYANGDKEVLYFKDFNSGAMIQNIVDRAKKAAIKAVLETGQPGLRVQHLQDAIIDEFAENEDLPNTTNPDDWARISGKKGERIVYIRTLVSGKNQESGRAIDTATNTGQYL.

Residues 1 to 12 (MQHDRPGSRPEE) show a composition bias toward basic and acidic residues. Residues 1–22 (MQHDRPGSRPEEGGEQQIGGDA) are disordered. Positions 21 to 97 (DAELNSQIRL…REEVDRLAQP (77 aa)) form a coiled coil. 284 to 289 (GCGKTL) lines the ATP pocket. Residues 596-597 (YL) are docks into pockets in the proteasome alpha-ring.

The protein belongs to the AAA ATPase family. In terms of assembly, homohexamer. Assembles into a hexameric ring structure that caps the 20S proteasome core. Strongly interacts with the prokaryotic ubiquitin-like protein Pup through a hydrophobic interface; the interacting region of ARC lies in its N-terminal coiled-coil domain. There is one Pup binding site per ARC hexamer ring. Upon ATP-binding, the C-terminus of ARC interacts with the alpha-rings of the proteasome core, possibly by binding to the intersubunit pockets.

It participates in protein degradation; proteasomal Pup-dependent pathway. Its function is as follows. ATPase which is responsible for recognizing, binding, unfolding and translocation of pupylated proteins into the bacterial 20S proteasome core particle. May be essential for opening the gate of the 20S proteasome via an interaction with its C-terminus, thereby allowing substrate entry and access to the site of proteolysis. Thus, the C-termini of the proteasomal ATPase may function like a 'key in a lock' to induce gate opening and therefore regulate proteolysis. This chain is Proteasome-associated ATPase, found in Saccharopolyspora erythraea (strain ATCC 11635 / DSM 40517 / JCM 4748 / NBRC 13426 / NCIMB 8594 / NRRL 2338).